The chain runs to 358 residues: Chorismate synthase (358 aa).

The NADP(+) site is built by Arg-48 and Arg-54. FMN-binding positions include 125–127, Gly-282, 297–301, and Arg-323; these read RSS and KPPAS.

Belongs to the chorismate synthase family. Homotetramer. Requires FMNH2 as cofactor.

The catalysed reaction is 5-O-(1-carboxyvinyl)-3-phosphoshikimate = chorismate + phosphate. The protein operates within metabolic intermediate biosynthesis; chorismate biosynthesis; chorismate from D-erythrose 4-phosphate and phosphoenolpyruvate: step 7/7. Catalyzes the anti-1,4-elimination of the C-3 phosphate and the C-6 proR hydrogen from 5-enolpyruvylshikimate-3-phosphate (EPSP) to yield chorismate, which is the branch point compound that serves as the starting substrate for the three terminal pathways of aromatic amino acid biosynthesis. This reaction introduces a second double bond into the aromatic ring system. The polypeptide is Chorismate synthase (Roseiflexus castenholzii (strain DSM 13941 / HLO8)).